The chain runs to 952 residues: Glycine dehydrogenase (decarboxylating) (952 aa).

N6-(pyridoxal phosphate)lysine is present on K703.

Belongs to the GcvP family. As to quaternary structure, the glycine cleavage system is composed of four proteins: P, T, L and H. Requires pyridoxal 5'-phosphate as cofactor.

It carries out the reaction N(6)-[(R)-lipoyl]-L-lysyl-[glycine-cleavage complex H protein] + glycine + H(+) = N(6)-[(R)-S(8)-aminomethyldihydrolipoyl]-L-lysyl-[glycine-cleavage complex H protein] + CO2. The glycine cleavage system catalyzes the degradation of glycine. The P protein binds the alpha-amino group of glycine through its pyridoxal phosphate cofactor; CO(2) is released and the remaining methylamine moiety is then transferred to the lipoamide cofactor of the H protein. In Mycolicibacterium gilvum (strain PYR-GCK) (Mycobacterium gilvum (strain PYR-GCK)), this protein is Glycine dehydrogenase (decarboxylating).